Consider the following 328-residue polypeptide: Aspartate carbamoyltransferase catalytic subunit (328 aa).

The carbamoyl phosphate site is built by Arg-55 and Thr-56. Lys-83 is an L-aspartate binding site. Carbamoyl phosphate is bound by residues Arg-105, His-135, and Gln-138. L-aspartate-binding residues include Arg-176 and Arg-230. Residues Gly-271 and Pro-272 each contribute to the carbamoyl phosphate site.

This sequence belongs to the aspartate/ornithine carbamoyltransferase superfamily. ATCase family. Heterododecamer (2C3:3R2) of six catalytic PyrB chains organized as two trimers (C3), and six regulatory PyrI chains organized as three dimers (R2).

The catalysed reaction is carbamoyl phosphate + L-aspartate = N-carbamoyl-L-aspartate + phosphate + H(+). Its pathway is pyrimidine metabolism; UMP biosynthesis via de novo pathway; (S)-dihydroorotate from bicarbonate: step 2/3. Its function is as follows. Catalyzes the condensation of carbamoyl phosphate and aspartate to form carbamoyl aspartate and inorganic phosphate, the committed step in the de novo pyrimidine nucleotide biosynthesis pathway. In Streptomyces griseus subsp. griseus (strain JCM 4626 / CBS 651.72 / NBRC 13350 / KCC S-0626 / ISP 5235), this protein is Aspartate carbamoyltransferase catalytic subunit.